The primary structure comprises 1034 residues: FACT complex subunit spt-16 (1034 aa).

Basic and acidic residues-rich tracts occupy residues 433–448 (EEQENRETERDTDQKK), 463–481 (TRNKTTNEDLRKERQKELG), and 493–503 (SKQDGGTDEKK). The disordered stretch occupies residues 433–511 (EEQENRETER…KKVKKSNVSY (79 aa)). Residues 617–642 (LSTAFRQIKEMQKRFRTEEAEEREKD) adopt a coiled-coil conformation. Composition is skewed to acidic residues over residues 926–950 (AESEGEDAGDDSDESDAYDPEEADA) and 959–983 (SDEDESEGEETESDDDEEGSLDSDE). The interval 926-1034 (AESEGEDAGD…KAGPSHKRRK (109 aa)) is disordered. A compositionally biased stretch (basic and acidic residues) spans 984–1020 (SEGKDWSDLEEEAAKADKRREVEDGGRDRDRDRDRKR). Residues 1021–1034 (PSSSKAGPSHKRRK) show a composition bias toward basic residues.

It belongs to the peptidase M24 family. SPT16 subfamily. In terms of assembly, component of the FACT complex, a stable heterodimer of spt-16 and hmg-3 or hmg-4.

Its subcellular location is the nucleus. The protein localises to the chromosome. Component of the FACT complex, a general chromatin factor that acts to reorganize nucleosomes. The FACT complex is involved in multiple processes that require DNA as a template such as mRNA elongation, DNA replication and DNA repair. During transcription elongation the FACT complex acts as a histone chaperone that both destabilizes and restores nucleosomal structure. It facilitates the passage of RNA polymerase II and transcription by promoting the dissociation of one histone H2A-H2B dimer from the nucleosome, then subsequently promotes the reestablishment of the nucleosome following the passage of RNA polymerase II. In Caenorhabditis briggsae, this protein is FACT complex subunit spt-16 (spt-16).